Here is a 108-residue protein sequence, read N- to C-terminus: Small ribosomal subunit protein bS6 (108 aa).

The protein belongs to the bacterial ribosomal protein bS6 family.

Functionally, binds together with bS18 to 16S ribosomal RNA. The protein is Small ribosomal subunit protein bS6 of Dichelobacter nodosus (strain VCS1703A).